A 164-amino-acid polypeptide reads, in one-letter code: Galectin-3 (164 aa).

The Galectin domain maps to 9 to 154; sequence STVDLSEPLK…FSDVLGVTVL (146 aa). 6 residues coordinate a carbohydrate: N45, R64, N73, R81, E84, and N138.

In terms of assembly, homotetramer. Oligomerization is required for carbohydrate binding.

Its subcellular location is the secreted. The protein resides in the extracellular space. The protein localises to the extracellular matrix. It localises to the cell wall. Binds complex carbohydrates, such as chitooligosaccharides. Does not bind lactose. May play a role in fruiting body formation. In Coprinopsis cinerea (Inky cap fungus), this protein is Galectin-3 (Cgl3).